The following is a 321-amino-acid chain: Histidine N-alpha-methyltransferase (321 aa).

Tyr-56 contacts L-histidine. Residues Gly-86, Lys-92, Asp-113, and 141–142 (DF) contribute to the S-adenosyl-L-methionine site. Residues Asn-166, Tyr-206, and 282–284 (EVS) each bind L-histidine.

It belongs to the methyltransferase superfamily. EgtD family. In terms of assembly, monomer.

The catalysed reaction is L-histidine + 3 S-adenosyl-L-methionine = hercynine + 3 S-adenosyl-L-homocysteine + 3 H(+). Its pathway is amino-acid biosynthesis; ergothioneine biosynthesis. In terms of biological role, catalyzes the SAM-dependent triple methylation of the alpha-amino group of histidine to form hercynine, a step in the biosynthesis pathway of ergothioneine. Among all the proteinogenic amino acids, only L-histidine is a substrate. In Mycolicibacterium smegmatis (strain ATCC 700084 / mc(2)155) (Mycobacterium smegmatis), this protein is Histidine N-alpha-methyltransferase.